A 25-amino-acid chain; its full sequence is Ocellatin-F1 (25 aa).

Leu25 bears the Leucine amide mark.

The protein belongs to the frog skin active peptide (FSAP) family. Ocellatin subfamily. As to expression, expressed by the skin glands.

Its subcellular location is the secreted. Its function is as follows. Antibacterial peptide that inhibits reference strains of both Gram-negative bacteria (E.coli, P.aeruginosa, E.cloacae, K.pneumoniae, and A.actinomycetemcomitans) and Gram-positive bacteria (S.aureus) with relatively low potencies (MIC=25-400 uM). Shows antifungal activity against C.lusitaniae (MIC=50.25 uM), but no activity against C.albicans. In the presence of an alkaloid (bufotenine), inhibits cellular infection by the rabies virus. The peptide shows very low hemolytic activity against rabbit erythrocytes. The low amphipathicity of alpha-helices demonstrated by wheel projection as well as the low cationicity may explain the low antibacterial and hemolytic potencies. This Leptodactylus labyrinthicus (Labyrinth frog) protein is Ocellatin-F1.